Reading from the N-terminus, the 406-residue chain is Phosphopentomutase (406 aa).

Aspartate 10, aspartate 305, histidine 310, aspartate 346, histidine 347, and histidine 358 together coordinate Mn(2+).

Belongs to the phosphopentomutase family. Mn(2+) is required as a cofactor.

It localises to the cytoplasm. The catalysed reaction is 2-deoxy-alpha-D-ribose 1-phosphate = 2-deoxy-D-ribose 5-phosphate. It carries out the reaction alpha-D-ribose 1-phosphate = D-ribose 5-phosphate. It participates in carbohydrate degradation; 2-deoxy-D-ribose 1-phosphate degradation; D-glyceraldehyde 3-phosphate and acetaldehyde from 2-deoxy-alpha-D-ribose 1-phosphate: step 1/2. Functionally, isomerase that catalyzes the conversion of deoxy-ribose 1-phosphate (dRib-1-P) and ribose 1-phosphate (Rib-1-P) to deoxy-ribose 5-phosphate (dRib-5-P) and ribose 5-phosphate (Rib-5-P), respectively. This chain is Phosphopentomutase, found in Photobacterium profundum (strain SS9).